The primary structure comprises 313 residues: Olfactory receptor 5D18 (313 aa).

Residues 1–26 lie on the Extracellular side of the membrane; it reads MLLTDRNTSGTTFTLLGFSDYPELQV. N-linked (GlcNAc...) asparagine glycosylation occurs at N7. The chain crosses the membrane as a helical span at residues 27 to 47; that stretch reads PLFLVFLAIYNVTVLGNIGLI. Residues 48 to 55 lie on the Cytoplasmic side of the membrane; sequence VIIKINPK. Residues 56 to 76 traverse the membrane as a helical segment; sequence LHTPMYFFLSQLSFVDFCYSS. Residues 77-100 lie on the Extracellular side of the membrane; the sequence is IIAPKMLVNLVVKDRTISFLGCVV. Residues C98 and C190 are joined by a disulfide bond. A helical membrane pass occupies residues 101 to 121; sequence QFFFFCTFVVTESFLLAVMAY. Residues 122–140 lie on the Cytoplasmic side of the membrane; it reads DRFVAICNPLLYTVNMSQK. A helical membrane pass occupies residues 141-161; the sequence is LCVLLVVGSYAWGVSCSLELT. The Extracellular portion of the chain corresponds to 162–197; that stretch reads CSALKLCFHGFNTINHFFCEFSSLLSLSCSDTYINQ. The helical transmembrane segment at 198-218 threads the bilayer; that stretch reads WLLFFLATFNEISTLLIVLTS. The Cytoplasmic portion of the chain corresponds to 219–238; it reads YAFIVVTILKMRSVSGRRKA. A helical transmembrane segment spans residues 239–259; that stretch reads FSTCASHLTAITIFHGTILFL. The Extracellular segment spans residues 260 to 272; that stretch reads YCVPNSKNSRHTV. The helical transmembrane segment at 273 to 293 threads the bilayer; it reads KVASVFYTVVIPMLNPLIYSL. Topologically, residues 294–313 are cytoplasmic; sequence RNKDVKDTVTEILDTKVFSY.

This sequence belongs to the G-protein coupled receptor 1 family.

It localises to the cell membrane. Its function is as follows. Odorant receptor. This chain is Olfactory receptor 5D18 (OR5D18), found in Homo sapiens (Human).